Consider the following 103-residue polypeptide: Small ribosomal subunit protein bS18 (103 aa).

Basic and acidic residues predominate over residues M1 to Q19. The interval M1–R33 is disordered. The span at G24 to R33 shows a compositional bias: basic residues.

This sequence belongs to the bacterial ribosomal protein bS18 family. In terms of assembly, part of the 30S ribosomal subunit. Forms a tight heterodimer with protein bS6.

Its function is as follows. Binds as a heterodimer with protein bS6 to the central domain of the 16S rRNA, where it helps stabilize the platform of the 30S subunit. The protein is Small ribosomal subunit protein bS18 of Geobacter sulfurreducens (strain ATCC 51573 / DSM 12127 / PCA).